A 192-amino-acid polypeptide reads, in one-letter code: Leucine-rich repeat-containing protein 51 (192 aa).

LRR repeat units follow at residues 49 to 71 (SLTQ…NQVA), 80 to 101 (NLAW…LTTF), and 103 to 124 (NLSV…NKLA). The 39-residue stretch at 137-175 (NPMEEEKGYRQYVLCTLSRITTFDFSGVTKADRTTAEVW) folds into the LRRCT domain.

It is found in the cytoplasm. The protein is Leucine-rich repeat-containing protein 51 of Homo sapiens (Human).